A 153-amino-acid chain; its full sequence is uncharacterized protein (153 aa).

The first 22 residues, 1–22 (MKMLKKGTAVLFVMIMAVMLVA), serve as a signal peptide directing secretion. Residue C23 is the site of N-palmitoyl cysteine attachment. A lipid anchor (S-diacylglycerol cysteine) is attached at C23. The interval 117 to 153 (DMNKIPGMSSNGDTSKGISMEESAKMLESQGYKEVSK) is disordered. Positions 124–133 (MSSNGDTSKG) are enriched in polar residues.

To E.coli YehR.

It localises to the cell membrane. This is an uncharacterized protein from Listeria monocytogenes serovar 1/2a (strain ATCC BAA-679 / EGD-e).